The sequence spans 290 residues: 33 kDa chaperonin (290 aa).

2 disulfides stabilise this stretch: Cys231-Cys233 and Cys263-Cys266.

Belongs to the HSP33 family. Under oxidizing conditions two disulfide bonds are formed involving the reactive cysteines. Under reducing conditions zinc is bound to the reactive cysteines and the protein is inactive.

Its subcellular location is the cytoplasm. In terms of biological role, redox regulated molecular chaperone. Protects both thermally unfolding and oxidatively damaged proteins from irreversible aggregation. Plays an important role in the bacterial defense system toward oxidative stress. This chain is 33 kDa chaperonin, found in Thermotoga sp. (strain RQ2).